Here is a 464-residue protein sequence, read N- to C-terminus: V-type ATP synthase beta chain (464 aa).

It belongs to the ATPase alpha/beta chains family.

Produces ATP from ADP in the presence of a proton gradient across the membrane. The V-type beta chain is a regulatory subunit. In Streptococcus sanguinis (strain SK36), this protein is V-type ATP synthase beta chain.